Consider the following 77-residue polypeptide: Conotoxin VnMKLT1-012 (77 aa).

An N-terminal signal peptide occupies residues 1-22 (MKLTCMMIVAVLFLTAWTFVTA). A propeptide spanning residues 23–48 (DDSRNGLDYLFPKARHEMNPKASRDI) is cleaved from the precursor. 3 disulfide bridges follow: C51-C68, C58-C72, and C67-C76.

This sequence belongs to the conotoxin O1 superfamily. As to expression, expressed by the venom duct.

The protein localises to the secreted. This chain is Conotoxin VnMKLT1-012, found in Conus ventricosus (Mediterranean cone).